Reading from the N-terminus, the 296-residue chain is Coatomer subunit epsilon (296 aa).

This sequence belongs to the COPE family. In terms of assembly, oligomeric complex that consists of at least the alpha, beta, beta', gamma, delta, epsilon and zeta subunits. Interacts with the ESCRT-0 subunit VPS27.

The protein resides in the cytoplasm. It localises to the golgi apparatus membrane. It is found in the cytoplasmic vesicle. The protein localises to the COPI-coated vesicle membrane. The coatomer is a cytosolic protein complex that binds to dilysine motifs and reversibly associates with Golgi non-clathrin-coated vesicles, which further mediate biosynthetic protein transport from the ER, via the Golgi up to the trans Golgi network. The coatomer complex is required for budding from Golgi membranes, and is essential for the retrograde Golgi-to-ER transport of dilysine-tagged proteins. The polypeptide is Coatomer subunit epsilon (SEC28) (Saccharomyces cerevisiae (strain ATCC 204508 / S288c) (Baker's yeast)).